The primary structure comprises 368 residues: Flagellar P-ring protein (368 aa).

Residues 1–22 (MLIPLARAVLALELLGAGAAHA) form the signal peptide.

Belongs to the FlgI family. The basal body constitutes a major portion of the flagellar organelle and consists of four rings (L,P,S, and M) mounted on a central rod.

It is found in the periplasm. The protein localises to the bacterial flagellum basal body. In terms of biological role, assembles around the rod to form the L-ring and probably protects the motor/basal body from shearing forces during rotation. This Bordetella pertussis (strain Tohama I / ATCC BAA-589 / NCTC 13251) protein is Flagellar P-ring protein.